The following is a 185-amino-acid chain: Elongation factor P 1 (185 aa).

This sequence belongs to the elongation factor P family.

Its subcellular location is the cytoplasm. It functions in the pathway protein biosynthesis; polypeptide chain elongation. Functionally, involved in peptide bond synthesis. Stimulates efficient translation and peptide-bond synthesis on native or reconstituted 70S ribosomes in vitro. Probably functions indirectly by altering the affinity of the ribosome for aminoacyl-tRNA, thus increasing their reactivity as acceptors for peptidyl transferase. This chain is Elongation factor P 1 (efp1), found in Chlamydia muridarum (strain MoPn / Nigg).